Consider the following 280-residue polypeptide: Proteasome subunit beta (280 aa).

Residues 1–53 constitute a propeptide, removed in mature form; by autocatalysis; the sequence is MSEYSAGRSGFSPAYLDRVGSSFTDFLAAAAPHLLPGSRPVPQIPVGNVTPHG. The active-site Nucleophile is the T54.

This sequence belongs to the peptidase T1B family. The 20S proteasome core is composed of 14 alpha and 14 beta subunits that assemble into four stacked heptameric rings, resulting in a barrel-shaped structure. The two inner rings, each composed of seven catalytic beta subunits, are sandwiched by two outer rings, each composed of seven alpha subunits. The catalytic chamber with the active sites is on the inside of the barrel. Has a gated structure, the ends of the cylinder being occluded by the N-termini of the alpha-subunits. Is capped by the proteasome-associated ATPase, ARC.

It localises to the cytoplasm. The catalysed reaction is Cleavage of peptide bonds with very broad specificity.. Its pathway is protein degradation; proteasomal Pup-dependent pathway. The formation of the proteasomal ATPase ARC-20S proteasome complex, likely via the docking of the C-termini of ARC into the intersubunit pockets in the alpha-rings, may trigger opening of the gate for substrate entry. Interconversion between the open-gate and close-gate conformations leads to a dynamic regulation of the 20S proteasome proteolysis activity. Functionally, component of the proteasome core, a large protease complex with broad specificity involved in protein degradation. The protein is Proteasome subunit beta of Geodermatophilus obscurus (strain ATCC 25078 / DSM 43160 / JCM 3152 / CCUG 61914 / KCC A-0152 / KCTC 9177 / NBRC 13315 / NRRL B-3577 / G-20).